We begin with the raw amino-acid sequence, 286 residues long: Orotidine 5'-phosphate decarboxylase (286 aa).

Substrate-binding positions include Asp35, 57-59 (KTH), 89-98 (DRKFADIGNT), Tyr239, and Arg257. Lys91 (proton donor) is an active-site residue.

This sequence belongs to the OMP decarboxylase family.

The enzyme catalyses orotidine 5'-phosphate + H(+) = UMP + CO2. The protein operates within pyrimidine metabolism; UMP biosynthesis via de novo pathway; UMP from orotate: step 2/2. This chain is Orotidine 5'-phosphate decarboxylase (URA3), found in Yarrowia lipolytica (strain CLIB 122 / E 150) (Yeast).